We begin with the raw amino-acid sequence, 347 residues long: Globoside alpha-1,3-N-acetylgalactosaminyltransferase 1 (347 aa).

Over Met-1 to Leu-6 the chain is Cytoplasmic. A helical; Signal-anchor for type II membrane protein membrane pass occupies residues Ala-7–Ile-27. The Lumenal portion of the chain corresponds to Lys-28–Thr-347. N-linked (GlcNAc...) asparagine glycosylation is present at Asn-108. Substrate-binding positions include Phe-116–Tyr-121, Asp-206–Asp-208, and His-228–Tyr-231. Mn(2+) is bound by residues Asp-206 and Asp-208. Glu-298 serves as the catalytic Nucleophile.

This sequence belongs to the glycosyltransferase 6 family. The cofactor is Mn(2+).

It is found in the golgi apparatus membrane. The catalysed reaction is a globoside Gb4Cer (d18:1(4E)) + UDP-N-acetyl-alpha-D-galactosamine = a globoside Forssman (d18:1(4E)) + UDP + H(+). The enzyme catalyses a globoside Gb4Cer + UDP-N-acetyl-alpha-D-galactosamine = a globoside IV3GalNAc-Gb4Cer + UDP + H(+). It functions in the pathway protein modification; protein glycosylation. Its function is as follows. Catalyzes the formation of Forssman glycolipid via the addition of N-acetylgalactosamine (GalNAc) in alpha-1,3-linkage to GalNAcb-1,3Gala-1,4Galb-1,4GlcCer (Gb4Cer). Forssman glycolipid (also called Forssman antigen; FG) probably serves for adherence of some pathogens. Conversely, it diminishes Shiga toxins susceptibility. The polypeptide is Globoside alpha-1,3-N-acetylgalactosaminyltransferase 1 (Mus musculus (Mouse)).